A 324-amino-acid polypeptide reads, in one-letter code: Ribose 1,5-bisphosphate isomerase (324 aa).

Substrate contacts are provided by residues 22–25 and Arg65; that span reads RGAG. Cys135 serves as the catalytic Proton acceptor. 137–139 lines the substrate pocket; the sequence is SKA. Catalysis depends on Asp204, which acts as the Proton donor. Residues 214 to 215 and Lys240 each bind substrate; that span reads NK.

It belongs to the eIF-2B alpha/beta/delta subunits family. R15P isomerase subfamily.

It carries out the reaction alpha-D-ribose 1,5-bisphosphate = D-ribulose 1,5-bisphosphate. Catalyzes the isomerization of ribose 1,5-bisphosphate (R15P) to ribulose 1,5-bisphosphate (RuBP), the CO(2) acceptor and substrate for RubisCO. Functions in an archaeal AMP degradation pathway, together with AMP phosphorylase and RubisCO. This is Ribose 1,5-bisphosphate isomerase from Pyrococcus horikoshii (strain ATCC 700860 / DSM 12428 / JCM 9974 / NBRC 100139 / OT-3).